Consider the following 549-residue polypeptide: Glutamyl-tRNA(Gln) amidotransferase subunit B, chloroplastic/mitochondrial (549 aa).

The protein belongs to the GatB/GatE family. GatB subfamily. In terms of assembly, subunit of the heterotrimeric GatCAB amidotransferase (AdT) complex, composed of A, B and C subunits.

It localises to the mitochondrion. The protein resides in the plastid. The protein localises to the chloroplast. It carries out the reaction L-glutamyl-tRNA(Gln) + L-glutamine + ATP + H2O = L-glutaminyl-tRNA(Gln) + L-glutamate + ADP + phosphate + H(+). Allows the formation of correctly charged Gln-tRNA(Gln) through the transamidation of misacylated Glu-tRNA(Gln) in chloroplasts and mitochondria. The reaction takes place in the presence of glutamine and ATP through an activated gamma-phospho-Glu-tRNA(Gln). The protein is Glutamyl-tRNA(Gln) amidotransferase subunit B, chloroplastic/mitochondrial of Ricinus communis (Castor bean).